The chain runs to 339 residues: Glycerol-3-phosphate dehydrogenase [NAD(P)+] (339 aa).

Serine 15, tyrosine 16, histidine 36, and lysine 110 together coordinate NADPH. 3 residues coordinate sn-glycerol 3-phosphate: lysine 110, glycine 139, and threonine 141. NADPH is bound at residue alanine 143. Residues lysine 195, aspartate 248, serine 258, arginine 259, and asparagine 260 each contribute to the sn-glycerol 3-phosphate site. Residue lysine 195 is the Proton acceptor of the active site. NADPH is bound at residue arginine 259. NADPH is bound by residues valine 283 and glutamate 285.

The protein belongs to the NAD-dependent glycerol-3-phosphate dehydrogenase family.

Its subcellular location is the cytoplasm. It catalyses the reaction sn-glycerol 3-phosphate + NAD(+) = dihydroxyacetone phosphate + NADH + H(+). It carries out the reaction sn-glycerol 3-phosphate + NADP(+) = dihydroxyacetone phosphate + NADPH + H(+). It functions in the pathway membrane lipid metabolism; glycerophospholipid metabolism. In terms of biological role, catalyzes the reduction of the glycolytic intermediate dihydroxyacetone phosphate (DHAP) to sn-glycerol 3-phosphate (G3P), the key precursor for phospholipid synthesis. The protein is Glycerol-3-phosphate dehydrogenase [NAD(P)+] of Escherichia coli O17:K52:H18 (strain UMN026 / ExPEC).